The chain runs to 359 residues: Glycerol-1-phosphate dehydrogenase [NAD(P)+] (359 aa).

NAD(+)-binding positions include 107-111 (GRVID) and 129-132 (TAAS). D134 is a substrate binding site. NAD(+) is bound at residue S138. D181 lines the substrate pocket. Zn(2+) is bound by residues D181 and H261. Residue H265 coordinates substrate. Position 277 (H277) interacts with Zn(2+).

It belongs to the glycerol-1-phosphate dehydrogenase family. Requires Zn(2+) as cofactor.

Its subcellular location is the cytoplasm. The catalysed reaction is sn-glycerol 1-phosphate + NAD(+) = dihydroxyacetone phosphate + NADH + H(+). The enzyme catalyses sn-glycerol 1-phosphate + NADP(+) = dihydroxyacetone phosphate + NADPH + H(+). Its pathway is membrane lipid metabolism; glycerophospholipid metabolism. Catalyzes the NAD(P)H-dependent reduction of dihydroxyacetonephosphate (DHAP or glycerone phosphate) to glycerol 1-phosphate (G1P). The G1P thus generated is used as the glycerophosphate backbone of phospholipids in the cellular membranes of Archaea. The polypeptide is Glycerol-1-phosphate dehydrogenase [NAD(P)+] (Methanospirillum hungatei JF-1 (strain ATCC 27890 / DSM 864 / NBRC 100397 / JF-1)).